The sequence spans 397 residues: Ubiquitin-like modifier-activating enzyme 5 (397 aa).

Positions 77, 98, 121, 144, and 178 each coordinate ATP. 2 residues coordinate Zn(2+): Cys220 and Cys223. Cys244 (glycyl thioester intermediate) is an active-site residue. Positions 297 and 302 each coordinate Zn(2+).

It belongs to the ubiquitin-activating E1 family. UBA5 subfamily.

In terms of biological role, E1-like enzyme which activates UFM1. The polypeptide is Ubiquitin-like modifier-activating enzyme 5 (Culex quinquefasciatus (Southern house mosquito)).